Consider the following 461-residue polypeptide: Cysteine--tRNA ligase (461 aa).

Cysteine 28 contacts Zn(2+). Positions 30–40 (MTVYDYCHLGH) match the 'HIGH' region motif. Zn(2+) is bound by residues cysteine 212, histidine 237, and glutamate 241. Positions 269-273 (KMSKS) match the 'KMSKS' region motif. Residue lysine 272 coordinates ATP.

This sequence belongs to the class-I aminoacyl-tRNA synthetase family. Monomer. Zn(2+) serves as cofactor.

It localises to the cytoplasm. It carries out the reaction tRNA(Cys) + L-cysteine + ATP = L-cysteinyl-tRNA(Cys) + AMP + diphosphate. The chain is Cysteine--tRNA ligase from Aromatoleum aromaticum (strain DSM 19018 / LMG 30748 / EbN1) (Azoarcus sp. (strain EbN1)).